Reading from the N-terminus, the 475-residue chain is MSQTTDRLWGARFKSGPSAALAALSRCPERYFRLTPYDLAGSKAHAGELQRAGLLDEQETRTMIEALDGIGADFAAGRIAPTLDDEDVHTFIERLLTERLGALGGKLRAGRSRNDQTANDLRLFLRDHVRTLAVEVLALQTALVDQAEQHVESICPGFTHLQQAQPIVFAHHLLAHAQSMLRDVQRLMDWDARTSLSPLGAAAMAGSAIARQPQQSAKEMGYAGVCENSIDAVASRDHVAEFLFIASMLGINISRLAEEFCLWSSRQFRWVDLDDAYATGSSIMPQKKNPDIAELARGKAGRLIGNLTGLLSTLKSLPLSYNRDLSEDKNGVLDSVDTLLLVLPAMAGMVATMTVNVEELRRQAPLGFTLATEVADWLAVRGVPFKEAHEITGALVQACEKHDLELWEASPALLAEIDPRLTADVRDSLTLEAAIAARSGWGGTAPQQVREQIGRLKTALAAQQQWTENYQGFRL.

The protein belongs to the lyase 1 family. Argininosuccinate lyase subfamily.

The protein resides in the cytoplasm. It catalyses the reaction 2-(N(omega)-L-arginino)succinate = fumarate + L-arginine. It participates in amino-acid biosynthesis; L-arginine biosynthesis; L-arginine from L-ornithine and carbamoyl phosphate: step 3/3. The polypeptide is Argininosuccinate lyase 1 (Pseudomonas fluorescens (strain Pf0-1)).